Here is a 363-residue protein sequence, read N- to C-terminus: GDP-fucose transporter 1 (363 aa).

8 helical membrane passes run 33–55 (FLLR…ISMV), 75–97 (VTFY…ATCC), 110–129 (LKVA…MITF), 139–161 (VPFY…YLLL), 166–184 (SFYA…WLGI), 194–213 (SLTG…LNAI), 226–248 (IWRL…MIVL), and 263–285 (AHFW…VTGL).

This sequence belongs to the TPT transporter family. SLC35C subfamily.

The protein localises to the golgi apparatus membrane. It catalyses the reaction GMP(out) + GDP-beta-L-fucose(in) = GMP(in) + GDP-beta-L-fucose(out). Antiporter specific for GDP-l-fucose and depending on the concomitant reverse transport of GMP. Involved in GDP-fucose import from the cytoplasm into the Golgi lumen. This Mus musculus (Mouse) protein is GDP-fucose transporter 1 (Slc35c1).